The primary structure comprises 126 residues: MGPLGFVAVGIGAAVGAWLRWGLSVMWNALNPALPYGTLAANLLGGYLIGLAVGFFDTHPGLPPEWRLLAITGFLGGLTTFSTFSSEALANLISGDYGWALLHLLSHLGGSLLFAALGLWTYRLLA.

Helical transmembrane passes span Pro-3 to Leu-23, Tyr-36 to Phe-56, Leu-68 to Ala-88, and Trp-99 to Leu-119. 2 residues coordinate Na(+): Gly-76 and Thr-79.

This sequence belongs to the fluoride channel Fluc/FEX (TC 1.A.43) family.

Its subcellular location is the cell inner membrane. It catalyses the reaction fluoride(in) = fluoride(out). Its activity is regulated as follows. Na(+) is not transported, but it plays an essential structural role and its presence is essential for fluoride channel function. Functionally, fluoride-specific ion channel. Important for reducing fluoride concentration in the cell, thus reducing its toxicity. The polypeptide is Fluoride-specific ion channel FluC (Cupriavidus pinatubonensis (strain JMP 134 / LMG 1197) (Cupriavidus necator (strain JMP 134))).